Here is a 561-residue protein sequence, read N- to C-terminus: Putative transport protein YbjL (561 aa).

5 helical membrane-spanning segments follow: residues 8 to 28 (LLNG…LCLG), 32 to 52 (LGSV…LLGQ), 66 to 86 (FMLF…SIFF), 94 to 114 (MLAL…GKLF), and 158 to 178 (NLSL…IVGA). RCK C-terminal domains follow at residues 200–288 (RGLD…SFRN) and 292–373 (VFDR…RIGF). Transmembrane regions (helical) follow at residues 383 to 403 (LLAF…TFQF), 406 to 426 (FSFG…LGFL), 447 to 467 (FGLM…INNG), 475 to 495 (MLIA…LFGA), and 537 to 557 (GTYA…VIIW).

It belongs to the AAE transporter (TC 2.A.81) family. YbjL subfamily.

Its subcellular location is the cell membrane. The sequence is that of Putative transport protein YbjL from Salmonella choleraesuis (strain SC-B67).